The chain runs to 217 residues: Cytochrome c biogenesis ATP-binding export protein CcmA (217 aa).

The ABC transporter domain occupies 6–216; sequence LQLEQLACQR…QYKFFDQGNM (211 aa). 38 to 45 is an ATP binding site; sequence GHNGIGKT.

This sequence belongs to the ABC transporter superfamily. CcmA exporter (TC 3.A.1.107) family. In terms of assembly, the complex is composed of two ATP-binding proteins (CcmA) and two transmembrane proteins (CcmB).

Its subcellular location is the cell inner membrane. The enzyme catalyses heme b(in) + ATP + H2O = heme b(out) + ADP + phosphate + H(+). In terms of biological role, part of the ABC transporter complex CcmAB involved in the biogenesis of c-type cytochromes; once thought to export heme, this seems not to be the case, but its exact role is uncertain. Responsible for energy coupling to the transport system. The protein is Cytochrome c biogenesis ATP-binding export protein CcmA of Histophilus somni (strain 129Pt) (Haemophilus somnus).